The sequence spans 441 residues: Ribosomal protein uS12 methylthiotransferase RimO (441 aa).

Positions 8-118 (PKIGFVSLGC…VLEHVHHYTP (111 aa)) constitute an MTTase N-terminal domain. [4Fe-4S] cluster is bound by residues Cys-17, Cys-53, Cys-82, Cys-150, Cys-154, and Cys-157. A Radical SAM core domain is found at 136-373 (LTPRHYAYLK…MQLQQQISAE (238 aa)). A TRAM domain is found at 376–441 (QEKVGREILV…DEYDLWGTRV (66 aa)).

Belongs to the methylthiotransferase family. RimO subfamily. [4Fe-4S] cluster serves as cofactor.

The protein localises to the cytoplasm. The enzyme catalyses L-aspartate(89)-[ribosomal protein uS12]-hydrogen + (sulfur carrier)-SH + AH2 + 2 S-adenosyl-L-methionine = 3-methylsulfanyl-L-aspartate(89)-[ribosomal protein uS12]-hydrogen + (sulfur carrier)-H + 5'-deoxyadenosine + L-methionine + A + S-adenosyl-L-homocysteine + 2 H(+). Functionally, catalyzes the methylthiolation of an aspartic acid residue of ribosomal protein uS12. The protein is Ribosomal protein uS12 methylthiotransferase RimO of Klebsiella pneumoniae subsp. pneumoniae (strain ATCC 700721 / MGH 78578).